A 314-amino-acid chain; its full sequence is Ribonuclease Z (314 aa).

7 residues coordinate Zn(2+): H62, H64, D66, H67, H144, D215, and H273. Residue D66 is the Proton acceptor of the active site.

Belongs to the RNase Z family. In terms of assembly, homodimer. Zn(2+) is required as a cofactor.

The catalysed reaction is Endonucleolytic cleavage of RNA, removing extra 3' nucleotides from tRNA precursor, generating 3' termini of tRNAs. A 3'-hydroxy group is left at the tRNA terminus and a 5'-phosphoryl group is left at the trailer molecule.. Zinc phosphodiesterase, which displays some tRNA 3'-processing endonuclease activity. Probably involved in tRNA maturation, by removing a 3'-trailer from precursor tRNA. This is Ribonuclease Z from Prochlorococcus marinus (strain NATL1A).